The following is a 259-amino-acid chain: Bisphosphoglycerate mutase (259 aa).

N-acetylserine is present on Ser2. Substrate is bound by residues 10 to 17 (RHGEGQWN), 23 to 24 (CS), Arg62, 89 to 92 (ERHY), Arg100, and 116 to 117 (RR). His11 serves as the catalytic Tele-phosphohistidine intermediate. The active-site Proton donor/acceptor is the Glu89. Position 122 is a phosphothreonine (Thr122). 189 to 190 (GN) serves as a coordination point for substrate.

The protein belongs to the phosphoglycerate mutase family. BPG-dependent PGAM subfamily. Homodimer. As to expression, expressed in red blood cells. Expressed in placenta (labyrinthine trophoblasts).

It carries out the reaction (2R)-3-phospho-glyceroyl phosphate = (2R)-2,3-bisphosphoglycerate + H(+). The catalysed reaction is (2R)-2-phosphoglycerate = (2R)-3-phosphoglycerate. With respect to regulation, at alkaline pH BPGM favors the synthase reaction; however, at lower pH the phosphatase reaction is dominant. Inhibited by citrate. In terms of biological role, plays a major role in regulating hemoglobin oxygen affinity by controlling the levels of its allosteric effector 2,3-bisphosphoglycerate (2,3-BPG). Also exhibits mutase (EC 5.4.2.11) activity. The polypeptide is Bisphosphoglycerate mutase (Bpgm) (Mus musculus (Mouse)).